Here is a 600-residue protein sequence, read N- to C-terminus: ATP-dependent RNA helicase DDX55 (600 aa).

The short motif at 9–37 (WESLPVPLHPQVLGALRELGFPYMTPVQS) is the Q motif element. Residues 40-223 (IPLFMRNKDV…RAGLRNPVRV (184 aa)) enclose the Helicase ATP-binding domain. 53-60 (AVTGSGKT) provides a ligand contact to ATP. Residues 171–174 (DEAD) carry the DEAD box motif. One can recognise a Helicase C-terminal domain in the interval 254–402 (KFNQLVHFLR…EMKPQRNTAD (149 aa)). The span at 500-513 (EQQRREKTENEGRR) shows a compositional bias: basic and acidic residues. The tract at residues 500–550 (EQQRREKTENEGRRKFIKNKAWSKQKAKKEKKKKMNEKRKREEGSDIEDED) is disordered. Basic residues predominate over residues 514–537 (KFIKNKAWSKQKAKKEKKKKMNEK). The tract at residues 533-562 (KMNEKRKREEGSDIEDEDMEELLNDTRLLK) is important for nuclear localization. Phosphoserine occurs at positions 544 and 594.

The protein belongs to the DEAD box helicase family. DDX55/SPB4 subfamily. In terms of assembly, interacts with 28S rRNA. Interacts with double-stranded RNA substrates in vitro; the interaction stimulates ATPase activity.

The protein localises to the nucleus. Its subcellular location is the nucleoplasm. It carries out the reaction ATP + H2O = ADP + phosphate + H(+). Probable ATP-binding RNA helicase. Has ATPase activity and is involved in the maturation of precursor large subunit rRNAs. This chain is ATP-dependent RNA helicase DDX55, found in Homo sapiens (Human).